The sequence spans 500 residues: Glycerol kinase (500 aa).

Thr-14 contributes to the ADP binding site. Residues Thr-14, Thr-15, and Ser-16 each contribute to the ATP site. A sn-glycerol 3-phosphate-binding site is contributed by Thr-14. Arg-18 serves as a coordination point for ADP. Sn-glycerol 3-phosphate-binding residues include Arg-84, Glu-85, and Tyr-136. Residues Arg-84, Glu-85, and Tyr-136 each coordinate glycerol. His-232 carries the post-translational modification Phosphohistidine; by HPr. Asp-246 is a binding site for sn-glycerol 3-phosphate. Glycerol contacts are provided by Asp-246 and Gln-247. ADP contacts are provided by Thr-268 and Gly-311. Residues Thr-268, Gly-311, Gln-315, and Gly-412 each coordinate ATP. ADP contacts are provided by Gly-412 and Asn-416.

This sequence belongs to the FGGY kinase family. In terms of assembly, homotetramer and homodimer (in equilibrium). In terms of processing, the phosphoenolpyruvate-dependent sugar phosphotransferase system (PTS), including enzyme I, and histidine-containing protein (HPr) are required for the phosphorylation, which leads to the activation of the enzyme.

The enzyme catalyses glycerol + ATP = sn-glycerol 3-phosphate + ADP + H(+). The protein operates within polyol metabolism; glycerol degradation via glycerol kinase pathway; sn-glycerol 3-phosphate from glycerol: step 1/1. Its activity is regulated as follows. Activated by phosphorylation and inhibited by fructose 1,6-bisphosphate (FBP). In terms of biological role, key enzyme in the regulation of glycerol uptake and metabolism. Catalyzes the phosphorylation of glycerol to yield sn-glycerol 3-phosphate. This chain is Glycerol kinase, found in Limosilactobacillus reuteri (strain DSM 20016) (Lactobacillus reuteri).